The primary structure comprises 354 residues: Guanine nucleotide-binding protein G(i) subunit alpha-1 (354 aa).

Glycine 2 carries the N-myristoyl glycine lipid modification. Cysteine 3 carries the S-palmitoyl cysteine lipid modification. A G-alpha domain is found at 32–354 (REVKLLLLGA…KNNLKDCGLF (323 aa)). Positions 35–48 (KLLLLGAGESGKST) are G1 motif. GTP is bound by residues 43–48 (ESGKST), 150–151 (DS), and 175–178 (LRTR). Serine 47 is a Mg(2+) binding site. Residues 173 to 181 (DVLRTRVKT) form a G2 motif region. A Mg(2+)-binding site is contributed by threonine 181. The G3 motif stretch occupies residues 196-205 (FKMFDVGGQR). Residues 200–204 (DVGGQ), 269–272 (NKKD), and alanine 326 each bind GTP. The interval 265 to 272 (ILFLNKKD) is G4 motif. Residues 324 to 329 (TCATDT) are G5 motif.

This sequence belongs to the G-alpha family. G(i/o/t/z) subfamily. Heterotrimeric G proteins are composed of 3 units; alpha, beta and gamma. The alpha chain contains the guanine nucleotide binding site. Part of a spindle orientation complex. Identified in complex with the beta subunit GNB1 and the gamma subunit GNG1. Identified in complex with the beta subunit GNB1 and the gamma subunit GNG2. GTP binding causes dissociation of the heterotrimer, liberating the individual subunits so that they can interact with downstream effector proteins. Myristoylation at Gly-2 is required for membrane anchoring before palmitoylation. In terms of processing, palmitoylation at Cys-3 varies with membrane lipid composition.

The protein localises to the nucleus. It is found in the cytoplasm. Its subcellular location is the cell membrane. It localises to the cytoskeleton. The protein resides in the microtubule organizing center. The protein localises to the centrosome. It is found in the cell cortex. Its subcellular location is the membrane. The catalysed reaction is GTP + H2O = GDP + phosphate + H(+). Its function is as follows. Guanine nucleotide-binding proteins (G proteins) function as transducers downstream of G protein-coupled receptors (GPCRs) in numerous signaling cascades. The alpha chain contains the guanine nucleotide binding site and alternates between an active, GTP-bound state and an inactive, GDP-bound state. Signaling by an activated GPCR promotes GDP release and GTP binding. The alpha subunit has a low GTPase activity that converts bound GTP to GDP, thereby terminating the signal. Both GDP release and GTP hydrolysis are modulated by numerous regulatory proteins. Signaling is mediated via effector proteins, such as adenylate cyclase. Inhibits adenylate cyclase activity, leading to decreased intracellular cAMP levels. Required for cortical dynein-dynactin complex recruitment during metaphase. This is Guanine nucleotide-binding protein G(i) subunit alpha-1 (gnai1) from Xenopus laevis (African clawed frog).